The primary structure comprises 248 residues: Cell division protein ZapD (248 aa).

The protein belongs to the ZapD family. In terms of assembly, interacts with FtsZ.

The protein localises to the cytoplasm. Functionally, cell division factor that enhances FtsZ-ring assembly. Directly interacts with FtsZ and promotes bundling of FtsZ protofilaments, with a reduction in FtsZ GTPase activity. This Aliivibrio salmonicida (strain LFI1238) (Vibrio salmonicida (strain LFI1238)) protein is Cell division protein ZapD.